Here is a 497-residue protein sequence, read N- to C-terminus: Lysine--tRNA ligase (497 aa).

2 residues coordinate Mg(2+): Glu405 and Glu412.

The protein belongs to the class-II aminoacyl-tRNA synthetase family. As to quaternary structure, homodimer. It depends on Mg(2+) as a cofactor.

It localises to the cytoplasm. The catalysed reaction is tRNA(Lys) + L-lysine + ATP = L-lysyl-tRNA(Lys) + AMP + diphosphate. The sequence is that of Lysine--tRNA ligase from Gloeobacter violaceus (strain ATCC 29082 / PCC 7421).